The chain runs to 87 residues: Small ribosomal subunit protein uS17 (87 aa).

The protein belongs to the universal ribosomal protein uS17 family. As to quaternary structure, part of the 30S ribosomal subunit.

In terms of biological role, one of the primary rRNA binding proteins, it binds specifically to the 5'-end of 16S ribosomal RNA. The polypeptide is Small ribosomal subunit protein uS17 (Listeria innocua serovar 6a (strain ATCC BAA-680 / CLIP 11262)).